Here is a 142-residue protein sequence, read N- to C-terminus: ATP synthase epsilon chain (142 aa).

It belongs to the ATPase epsilon chain family. F-type ATPases have 2 components, CF(1) - the catalytic core - and CF(0) - the membrane proton channel. CF(1) has five subunits: alpha(3), beta(3), gamma(1), delta(1), epsilon(1). CF(0) has three main subunits: a, b and c.

It localises to the cell inner membrane. Functionally, produces ATP from ADP in the presence of a proton gradient across the membrane. In Shewanella frigidimarina (strain NCIMB 400), this protein is ATP synthase epsilon chain.